Reading from the N-terminus, the 534-residue chain is Membrane-bound lytic murein transglycosylase F (534 aa).

The signal sequence occupies residues 1-24 (MQISQFNRLKRSALLFASVLLLSA). Residues 25–285 (CQIESEPKSE…TLEEKYIGHI (261 aa)) are non-LT domain. An LT domain region spans residues 287 to 534 (AFDYVDTRAF…AEQTPVPKAE (248 aa)). The active site involves Glu330. A disordered region spans residues 507 to 534 (VSGAVEVTPPPEENAPQEAEQTPVPKAE). Residues 520–534 (NAPQEAEQTPVPKAE) show a composition bias toward low complexity.

The protein in the N-terminal section; belongs to the bacterial solute-binding protein 3 family. In the C-terminal section; belongs to the transglycosylase Slt family.

Its subcellular location is the cell outer membrane. It catalyses the reaction Exolytic cleavage of the (1-&gt;4)-beta-glycosidic linkage between N-acetylmuramic acid (MurNAc) and N-acetylglucosamine (GlcNAc) residues in peptidoglycan, from either the reducing or the non-reducing ends of the peptidoglycan chains, with concomitant formation of a 1,6-anhydrobond in the MurNAc residue.. Murein-degrading enzyme that degrades murein glycan strands and insoluble, high-molecular weight murein sacculi, with the concomitant formation of a 1,6-anhydromuramoyl product. Lytic transglycosylases (LTs) play an integral role in the metabolism of the peptidoglycan (PG) sacculus. Their lytic action creates space within the PG sacculus to allow for its expansion as well as for the insertion of various structures such as secretion systems and flagella. In Vibrio campbellii (strain ATCC BAA-1116), this protein is Membrane-bound lytic murein transglycosylase F.